We begin with the raw amino-acid sequence, 101 residues long: Large ribosomal subunit protein uL24 (101 aa).

The protein belongs to the universal ribosomal protein uL24 family. As to quaternary structure, part of the 50S ribosomal subunit.

In terms of biological role, one of two assembly initiator proteins, it binds directly to the 5'-end of the 23S rRNA, where it nucleates assembly of the 50S subunit. Functionally, one of the proteins that surrounds the polypeptide exit tunnel on the outside of the subunit. The polypeptide is Large ribosomal subunit protein uL24 (Streptococcus mutans serotype c (strain ATCC 700610 / UA159)).